The chain runs to 98 residues: MQKSCNEKEGKPKGSEAKREDEQPCGALEGQRLEGNFRQRLLQSLEEFKEDIDYRHFKGEEMTGEEEEMERCLEEIRSLRKKFRALHSNRTHSRDHPF.

Basic and acidic residues predominate over residues M1–E22. The tract at residues M1 to L33 is disordered. A coiled-coil region spans residues G59–N89.

This sequence belongs to the TFS-II family. TFA subfamily.

The protein resides in the nucleus. In terms of biological role, plays a role in the negative regulation of NF-kappa-B signaling at the basal level by modulating transcriptional activity of NF-kappa-B on its target gene promoters. Associates with cyclin D1 promoter containing Myc E-box sequence and transcriptionally represses cyclin D1 expression. Regulates telomerase reverse transcriptase expression and telomerase activity in both ALT (alternative lengthening of telomeres)and telomerase-positive cell lines. The sequence is that of Transcription elongation factor A protein-like 7 (Tceal7) from Mus musculus (Mouse).